The following is a 287-amino-acid chain: uncharacterized protein (287 aa).

The HTH araC/xylS-type domain occupies 183–281 (WEAARYLQEH…GISPIEYRKI (99 aa)). 2 consecutive DNA-binding regions (H-T-H motif) follow at residues 200–221 (KDLS…QQVL) and 248–271 (MGVI…KQIE).

This is an uncharacterized protein from Bacillus subtilis (strain 168).